The chain runs to 255 residues: Probable septum site-determining protein MinC (255 aa).

Positions Ser103 to Glu115 are enriched in basic and acidic residues. Residues Ser103 to Pro136 form a disordered region. The segment covering Val127–Pro136 has biased composition (pro residues).

The protein belongs to the MinC family. Interacts with MinD and FtsZ.

In terms of biological role, cell division inhibitor that blocks the formation of polar Z ring septums. Rapidly oscillates between the poles of the cell to destabilize FtsZ filaments that have formed before they mature into polar Z rings. Prevents FtsZ polymerization. In Ralstonia nicotianae (strain ATCC BAA-1114 / GMI1000) (Ralstonia solanacearum), this protein is Probable septum site-determining protein MinC.